We begin with the raw amino-acid sequence, 581 residues long: DNA primase (581 aa).

The CHC2-type zinc-finger motif lies at 40 to 64 (CPFHNEKTPSFTVNGEKQFYHCFGC). One can recognise a Toprim domain in the interval 259-341 (NRLLVVEGYM…GRQLRFMFLP (83 aa)). Positions 265, 309, and 311 each coordinate Mg(2+).

It belongs to the DnaG primase family. In terms of assembly, monomer. Interacts with DnaB. Requires Zn(2+) as cofactor. The cofactor is Mg(2+).

The catalysed reaction is ssDNA + n NTP = ssDNA/pppN(pN)n-1 hybrid + (n-1) diphosphate.. Functionally, RNA polymerase that catalyzes the synthesis of short RNA molecules used as primers for DNA polymerase during DNA replication. The polypeptide is DNA primase (Shigella flexneri).